A 93-amino-acid polypeptide reads, in one-letter code: Small ribosomal subunit protein uS19 (93 aa).

The protein belongs to the universal ribosomal protein uS19 family.

Functionally, protein S19 forms a complex with S13 that binds strongly to the 16S ribosomal RNA. The protein is Small ribosomal subunit protein uS19 of Rhodococcus erythropolis (strain PR4 / NBRC 100887).